The following is a 334-amino-acid chain: Holliday junction branch migration complex subunit RuvB (334 aa).

Positions 1 to 182 are large ATPase domain (RuvB-L); sequence MDERLVSSEL…FGVLSRLEYY (182 aa). ATP is bound by residues L21, R22, G63, K66, T67, T68, 129–131, R172, Y182, and R219; that span reads EDF. A Mg(2+)-binding site is contributed by T67. A small ATPAse domain (RuvB-S) region spans residues 183–253; the sequence is TRDELSEIVI…VAVDALERLQ (71 aa). The interval 256 to 334 is head domain (RuvB-H); the sequence is KLGLDHIDRK…HFKMEVPNHD (79 aa). DNA is bound by residues R311 and R316.

Belongs to the RuvB family. As to quaternary structure, homohexamer. Forms an RuvA(8)-RuvB(12)-Holliday junction (HJ) complex. HJ DNA is sandwiched between 2 RuvA tetramers; dsDNA enters through RuvA and exits via RuvB. An RuvB hexamer assembles on each DNA strand where it exits the tetramer. Each RuvB hexamer is contacted by two RuvA subunits (via domain III) on 2 adjacent RuvB subunits; this complex drives branch migration. In the full resolvosome a probable DNA-RuvA(4)-RuvB(12)-RuvC(2) complex forms which resolves the HJ.

It is found in the cytoplasm. The enzyme catalyses ATP + H2O = ADP + phosphate + H(+). In terms of biological role, the RuvA-RuvB-RuvC complex processes Holliday junction (HJ) DNA during genetic recombination and DNA repair, while the RuvA-RuvB complex plays an important role in the rescue of blocked DNA replication forks via replication fork reversal (RFR). RuvA specifically binds to HJ cruciform DNA, conferring on it an open structure. The RuvB hexamer acts as an ATP-dependent pump, pulling dsDNA into and through the RuvAB complex. RuvB forms 2 homohexamers on either side of HJ DNA bound by 1 or 2 RuvA tetramers; 4 subunits per hexamer contact DNA at a time. Coordinated motions by a converter formed by DNA-disengaged RuvB subunits stimulates ATP hydrolysis and nucleotide exchange. Immobilization of the converter enables RuvB to convert the ATP-contained energy into a lever motion, pulling 2 nucleotides of DNA out of the RuvA tetramer per ATP hydrolyzed, thus driving DNA branch migration. The RuvB motors rotate together with the DNA substrate, which together with the progressing nucleotide cycle form the mechanistic basis for DNA recombination by continuous HJ branch migration. Branch migration allows RuvC to scan DNA until it finds its consensus sequence, where it cleaves and resolves cruciform DNA. This is Holliday junction branch migration complex subunit RuvB from Bacillus licheniformis (strain ATCC 14580 / DSM 13 / JCM 2505 / CCUG 7422 / NBRC 12200 / NCIMB 9375 / NCTC 10341 / NRRL NRS-1264 / Gibson 46).